A 467-amino-acid chain; its full sequence is L-histidine transporter HutT (467 aa).

Helical transmembrane passes span 18 to 38, 39 to 59, 71 to 91, 99 to 119, 125 to 145, 155 to 175, 200 to 220, 245 to 265, 280 to 300, 334 to 354, 358 to 378, 402 to 422, and 429 to 449; these read FMAL…SAIQ, MAGP…FMVM, VAGS…GFIL, MVIV…FWFP, IWVL…VKVF, LKVG…AFGF, VGGL…IEII, ILLF…WPQI, GIGS…ISAI, WMTV…NYLI, VFLL…LMIL, FWPY…GVLG, and AALI…LLWC.

The protein belongs to the amino acid-polyamine-organocation (APC) superfamily. Amino acid transporter (AAT) (TC 2.A.3.1) family.

The protein localises to the cell inner membrane. The enzyme catalyses L-histidine(out) + n H(+)(out) = L-histidine(in) + n H(+)(in). Its activity is regulated as follows. Transport activity is inhibited by the proton ionophores carbonyl cyanide m-chlorophenyl hydrazine (CCCP) and 2,4-dinitrophenol (DNP), but not by valinomycin, nigericin and nonactin. Uptake is reduced in the presence of the sulfhydryl reagent N-ethylmaleimide (NEM). Uptake is not affected by arginine, lysine, proline or compounds structurally related to histidine such as imidazole, 3-amino-1,2,4-triazole and urocanate. Only 1,2,4-triazolyl-3-alanine reduces the rate of L-histidine uptake significantly. Functionally, major high-affinity histidine transporter. Binds and catalyzes the uptake of histidine into the cell. Functions as an histidine:proton symporter with high specificity for histidine. In Pseudomonas putida (strain ATCC 47054 / DSM 6125 / CFBP 8728 / NCIMB 11950 / KT2440), this protein is L-histidine transporter HutT.